Here is a 297-residue protein sequence, read N- to C-terminus: Undecaprenyl-diphosphatase (297 aa).

7 consecutive transmembrane segments (helical) span residues 58-78, 103-123, 138-158, 168-188, 208-228, 243-263, and 274-294; these read PGVA…LSYF, AQMG…GLLI, LAAI…AEQL, LRLA…IPGV, AARF…LVEL, VLAI…AWLL, and FVVY…TGTL.

Belongs to the UppP family.

Its subcellular location is the cell inner membrane. It carries out the reaction di-trans,octa-cis-undecaprenyl diphosphate + H2O = di-trans,octa-cis-undecaprenyl phosphate + phosphate + H(+). In terms of biological role, catalyzes the dephosphorylation of undecaprenyl diphosphate (UPP). Confers resistance to bacitracin. This is Undecaprenyl-diphosphatase from Synechococcus sp. (strain ATCC 27144 / PCC 6301 / SAUG 1402/1) (Anacystis nidulans).